The sequence spans 62 residues: Defensin BmKDfsin6 (62 aa).

Residues 1–24 (MKVIAILFLLAFVLCTMEITMVEA) form the signal peptide. Cystine bridges form between Cys-28-Cys-49, Cys-35-Cys-57, and Cys-39-Cys-59.

The protein belongs to the invertebrate defensin family. Type 2 subfamily. In terms of tissue distribution, highly expressed in non-venom gland (hemolymph) and moderately expressed in venom gland.

Its subcellular location is the secreted. Functionally, antibacterial peptide active against Gram-positive bacteria, but not on Gram-negative bacteria. Also has weak blocking activity on Kv1.1/KCNA1, Kv1.2/KCNA2, Kv1.3/KCNA3, KCa3.1/KCNN4/IK, KCa2.3/KCNN3/SK3 and Kv11.1/KCNH2/ERG1 channels (tested at 1 uM). It inhibits potassium channel current by interacting with the pore region. This Olivierus martensii (Manchurian scorpion) protein is Defensin BmKDfsin6.